Reading from the N-terminus, the 265-residue chain is Glycine/sarcosine N-methyltransferase (265 aa).

S-adenosyl-L-methionine-binding positions include Y28, W36, R45, A69, D90, 116 to 117 (DW), and L134. 3 residues coordinate substrate: N136, R169, and Y208.

It belongs to the class I-like SAM-binding methyltransferase superfamily. Glycine N-methyltransferase family. As to quaternary structure, monomer.

The enzyme catalyses glycine + 2 S-adenosyl-L-methionine = N,N-dimethylglycine + 2 S-adenosyl-L-homocysteine + 2 H(+). It carries out the reaction glycine + S-adenosyl-L-methionine = sarcosine + S-adenosyl-L-homocysteine + H(+). The catalysed reaction is sarcosine + S-adenosyl-L-methionine = N,N-dimethylglycine + S-adenosyl-L-homocysteine + H(+). Its pathway is amine and polyamine biosynthesis; betaine biosynthesis via glycine pathway; betaine from glycine: step 1/3. It functions in the pathway amine and polyamine biosynthesis; betaine biosynthesis via glycine pathway; betaine from glycine: step 2/3. Inhibited by acetate, dimethylglycine and S-adenosyl-L-homocysteine. Catalyzes the methylation of glycine and sarcosine to sarcosine and dimethylglycine, respectively, with S-adenosylmethionine (AdoMet) acting as the methyl donor. The protein is Glycine/sarcosine N-methyltransferase of Aphanothece halophytica.